Reading from the N-terminus, the 281-residue chain is uncharacterized protein (281 aa).

Helical transmembrane passes span Ala8 to Ser28, Leu97 to Gly117, Pro147 to Val167, and Ile210 to Ala230.

This sequence to S.pombe bem46 and yeast YNL320w.

The protein localises to the cell membrane. This is an uncharacterized protein from Mycobacterium tuberculosis (strain ATCC 25618 / H37Rv).